We begin with the raw amino-acid sequence, 168 residues long: Peptide deformylase 2 (168 aa).

Positions 91 and 133 each coordinate Fe cation. The active site involves glutamate 134. Histidine 137 serves as a coordination point for Fe cation.

The protein belongs to the polypeptide deformylase family. It depends on Fe(2+) as a cofactor.

It catalyses the reaction N-terminal N-formyl-L-methionyl-[peptide] + H2O = N-terminal L-methionyl-[peptide] + formate. Removes the formyl group from the N-terminal Met of newly synthesized proteins. Requires at least a dipeptide for an efficient rate of reaction. N-terminal L-methionine is a prerequisite for activity but the enzyme has broad specificity at other positions. The chain is Peptide deformylase 2 from Vibrio cholerae serotype O1 (strain ATCC 39315 / El Tor Inaba N16961).